Here is a 375-residue protein sequence, read N- to C-terminus: Growth/differentiation factor 8 (375 aa).

The signal sequence occupies residues 1–23 (MQKLQLCVYIYLFMLIVAGPVDL). Positions 24-266 (NENSEQKENV…VTDTPKRSRR (243 aa)) are excised as a propeptide. N71 carries an N-linked (GlcNAc...) asparagine glycan. 4 disulfide bridges follow: C272-C282, C281-C340, C309-C372, and C313-C374.

The protein belongs to the TGF-beta family. As to quaternary structure, homodimer; disulfide-linked. Interacts with WFIKKN2, leading to inhibit its activity. Interacts with FSTL3. In terms of processing, synthesized as large precursor molecule that undergoes proteolytic cleavage to generate an N-terminal propeptide and a disulfide linked C-terminal dimer, which is the biologically active molecule. The circulating form consists of a latent complex of the C-terminal dimer and other proteins, including its propeptide, which maintain the C-terminal dimer in a latent, inactive state. Ligand activation requires additional cleavage of the prodomain by a tolloid-like metalloproteinase.

Its subcellular location is the secreted. Functionally, acts specifically as a negative regulator of skeletal muscle growth. This chain is Growth/differentiation factor 8 (MSTN), found in Pan paniscus (Pygmy chimpanzee).